The chain runs to 99 residues: Aspartyl/glutamyl-tRNA(Asn/Gln) amidotransferase subunit C (99 aa).

The protein belongs to the GatC family. As to quaternary structure, heterotrimer of A, B and C subunits.

It catalyses the reaction L-glutamyl-tRNA(Gln) + L-glutamine + ATP + H2O = L-glutaminyl-tRNA(Gln) + L-glutamate + ADP + phosphate + H(+). It carries out the reaction L-aspartyl-tRNA(Asn) + L-glutamine + ATP + H2O = L-asparaginyl-tRNA(Asn) + L-glutamate + ADP + phosphate + 2 H(+). Its function is as follows. Allows the formation of correctly charged Asn-tRNA(Asn) or Gln-tRNA(Gln) through the transamidation of misacylated Asp-tRNA(Asn) or Glu-tRNA(Gln) in organisms which lack either or both of asparaginyl-tRNA or glutaminyl-tRNA synthetases. The reaction takes place in the presence of glutamine and ATP through an activated phospho-Asp-tRNA(Asn) or phospho-Glu-tRNA(Gln). This is Aspartyl/glutamyl-tRNA(Asn/Gln) amidotransferase subunit C from Delftia acidovorans (strain DSM 14801 / SPH-1).